Here is a 248-residue protein sequence, read N- to C-terminus: tRNA pseudouridine synthase A (248 aa).

Catalysis depends on D52, which acts as the Nucleophile. Y111 lines the substrate pocket.

It belongs to the tRNA pseudouridine synthase TruA family. As to quaternary structure, homodimer.

It carries out the reaction uridine(38/39/40) in tRNA = pseudouridine(38/39/40) in tRNA. Its function is as follows. Formation of pseudouridine at positions 38, 39 and 40 in the anticodon stem and loop of transfer RNAs. The chain is tRNA pseudouridine synthase A from Methylocella silvestris (strain DSM 15510 / CIP 108128 / LMG 27833 / NCIMB 13906 / BL2).